Consider the following 317-residue polypeptide: Zinc finger protein CRM3 (317 aa).

The span at 1 to 15 shows a compositional bias: low complexity; it reads MNFSLSKQSSEKQSS. The disordered stretch occupies residues 1-22; it reads MNFSLSKQSSEKQSSYTDKSRS. 2 consecutive C2H2-type zinc fingers follow at residues 254 to 276 and 282 to 306; these read KQCP…YLIH and FKCT…LKSH.

Its subcellular location is the nucleus. In terms of biological role, probable transcription factor involved in the regulation of the transcription of genes involved in cell rescue and defense, as well as cell cycle and DNA processing. This is Zinc finger protein CRM3 from Saccharomyces cerevisiae (strain ATCC 204508 / S288c) (Baker's yeast).